The primary structure comprises 187 residues: Hypoxanthine/guanine phosphoribosyltransferase (187 aa).

Belongs to the purine/pyrimidine phosphoribosyltransferase family. Archaeal HPRT subfamily. As to quaternary structure, homodimer.

Its subcellular location is the cytoplasm. It catalyses the reaction IMP + diphosphate = hypoxanthine + 5-phospho-alpha-D-ribose 1-diphosphate. The enzyme catalyses GMP + diphosphate = guanine + 5-phospho-alpha-D-ribose 1-diphosphate. It participates in purine metabolism; IMP biosynthesis via salvage pathway; IMP from hypoxanthine: step 1/1. Functionally, catalyzes a salvage reaction resulting in the formation of IMP that is energically less costly than de novo synthesis. The protein is Hypoxanthine/guanine phosphoribosyltransferase of Ferroglobus placidus (strain DSM 10642 / AEDII12DO).